Here is a 38-residue protein sequence, read N- to C-terminus: Large ribosomal subunit protein bL36 (38 aa).

Belongs to the bacterial ribosomal protein bL36 family.

This Acinetobacter baylyi (strain ATCC 33305 / BD413 / ADP1) protein is Large ribosomal subunit protein bL36.